The primary structure comprises 270 residues: MVKPMHLFAVVDALEQAQQFQQVLASRDVSTELVQIEQLNARFLRHHPELALCVDLDGLWLSANGMKMQPDWQAEIPRLKRASLKSEMIARACQINEQPSLIDATAGLGHDSLLMAYLGAHVTLVERHPVLFTLLEDAKSKAENDPFLSKYMQRIHLIFQDAHYYLQQCNQDDRKVDVIYLDPMFPQRDQHHQVIKKQAQVKKQMQLLHLLLPEDGEMDLGDQLLPLAQQIASRVVVKRPKHAVFLNEQQPDHQWQGDACRFDAYFQISM.

Residues 126–127 (ER) and Asp-182 contribute to the S-adenosyl-L-methionine site.

It belongs to the methyltransferase superfamily. RsmJ family.

The protein resides in the cytoplasm. The catalysed reaction is guanosine(1516) in 16S rRNA + S-adenosyl-L-methionine = N(2)-methylguanosine(1516) in 16S rRNA + S-adenosyl-L-homocysteine + H(+). Specifically methylates the guanosine in position 1516 of 16S rRNA. The chain is Ribosomal RNA small subunit methyltransferase J from Acinetobacter baylyi (strain ATCC 33305 / BD413 / ADP1).